A 394-amino-acid polypeptide reads, in one-letter code: Probable tRNA sulfurtransferase (394 aa).

Positions 61 to 168 (DETVATLSRI…PMINIYSEEI (108 aa)) constitute a THUMP domain. ATP contacts are provided by residues 185–186 (LL), 210–211 (YF), Arg267, Gly289, and Gln298.

The protein belongs to the ThiI family.

It is found in the cytoplasm. It carries out the reaction [ThiI sulfur-carrier protein]-S-sulfanyl-L-cysteine + a uridine in tRNA + 2 reduced [2Fe-2S]-[ferredoxin] + ATP + H(+) = [ThiI sulfur-carrier protein]-L-cysteine + a 4-thiouridine in tRNA + 2 oxidized [2Fe-2S]-[ferredoxin] + AMP + diphosphate. The catalysed reaction is [ThiS sulfur-carrier protein]-C-terminal Gly-Gly-AMP + S-sulfanyl-L-cysteinyl-[cysteine desulfurase] + AH2 = [ThiS sulfur-carrier protein]-C-terminal-Gly-aminoethanethioate + L-cysteinyl-[cysteine desulfurase] + A + AMP + 2 H(+). It functions in the pathway cofactor biosynthesis; thiamine diphosphate biosynthesis. Catalyzes the ATP-dependent transfer of a sulfur to tRNA to produce 4-thiouridine in position 8 of tRNAs, which functions as a near-UV photosensor. Also catalyzes the transfer of sulfur to the sulfur carrier protein ThiS, forming ThiS-thiocarboxylate. This is a step in the synthesis of thiazole, in the thiamine biosynthesis pathway. The sulfur is donated as persulfide by IscS. The chain is Probable tRNA sulfurtransferase from Agathobacter rectalis (strain ATCC 33656 / DSM 3377 / JCM 17463 / KCTC 5835 / VPI 0990) (Eubacterium rectale).